The following is a 347-amino-acid chain: NADH-quinone oxidoreductase subunit H (347 aa).

A run of 9 helical transmembrane segments spans residues 13–33 (LLILLKSVALIVILLVGVAYI), 50–70 (PNVVGPWGLFQAFADLFKFVF), 82–102 (GVFLLAPVVAAGLALAAWAVI), 115–135 (VGILYVFAIASLEVYGVIMAG), 161–181 (IGFVIVTVLLAVGSLNLTDIV), 198–218 (FLDWHWLALFPMFIIFFISAL), 248–268 (FLLFFLGEYVAIVLMCALTTI), 286–306 (VPGVVWFVLKLVAVFFMFALV), and 321–341 (LGWKVFLPISLFMVVATAAFL).

This sequence belongs to the complex I subunit 1 family. In terms of assembly, NDH-1 is composed of 14 different subunits. Subunits NuoA, H, J, K, L, M, N constitute the membrane sector of the complex.

It is found in the cell inner membrane. It catalyses the reaction a quinone + NADH + 5 H(+)(in) = a quinol + NAD(+) + 4 H(+)(out). Functionally, NDH-1 shuttles electrons from NADH, via FMN and iron-sulfur (Fe-S) centers, to quinones in the respiratory chain. The immediate electron acceptor for the enzyme in this species is believed to be ubiquinone. Couples the redox reaction to proton translocation (for every two electrons transferred, four hydrogen ions are translocated across the cytoplasmic membrane), and thus conserves the redox energy in a proton gradient. This subunit may bind ubiquinone. This chain is NADH-quinone oxidoreductase subunit H, found in Chelativorans sp. (strain BNC1).